The chain runs to 1183 residues: PAN2-PAN3 deadenylation complex catalytic subunit PAN2 (1183 aa).

WD repeat units follow at residues 150-189 (SIEN…KAAQ) and 289-328 (DVSS…ENAA). Positions 331–478 (ENGSIVLPPF…EEIEEELNDG (148 aa)) are linker. Residues 439 to 470 (AEGRARGKGRRDSGPRFRSEKDKKGTYKDKEE) are disordered. Over residues 448–469 (RRDSGPRFRSEKDKKGTYKDKE) the composition is skewed to basic and acidic residues. In terms of domain architecture, USP spans 479 to 864 (EVPKYYRKVE…VPAVIILERE (386 aa)). In terms of domain architecture, Exonuclease spans 916 to 1085 (VAIDAEFVAL…HDSIEDAHFA (170 aa)). The a divalent metal cation site is built by Asp919, Glu921, Asp1028, and Asp1081. Positions 1155-1183 (KSRMATPPPPTKLGLPQWASQNSPSPLRR) are disordered. A compositionally biased stretch (polar residues) spans 1172 to 1183 (WASQNSPSPLRR).

The protein belongs to the peptidase C19 family. PAN2 subfamily. As to quaternary structure, forms a heterotrimer with an asymmetric homodimer of the regulatory subunit PAN3 to form the poly(A)-nuclease (PAN) deadenylation complex. The cofactor is a divalent metal cation.

It localises to the cytoplasm. The catalysed reaction is Exonucleolytic cleavage of poly(A) to 5'-AMP.. Positively regulated by the regulatory subunit PAN3. Its function is as follows. Catalytic subunit of the poly(A)-nuclease (PAN) deadenylation complex, one of two cytoplasmic mRNA deadenylases involved in mRNA turnover. PAN specifically shortens poly(A) tails of RNA and the activity is stimulated by poly(A)-binding protein PAB1. PAN deadenylation is followed by rapid degradation of the shortened mRNA tails by the CCR4-NOT complex. Deadenylated mRNAs are then degraded by two alternative mechanisms, namely exosome-mediated 3'-5' exonucleolytic degradation, or deadenylation-dependent mRNA decaping and subsequent 5'-3' exonucleolytic degradation by XRN1. May also be involved in post-transcriptional maturation of mRNA poly(A) tails. The sequence is that of PAN2-PAN3 deadenylation complex catalytic subunit PAN2 from Cryptococcus neoformans var. neoformans serotype D (strain B-3501A) (Filobasidiella neoformans).